The primary structure comprises 178 residues: MKLLAPVLWAMAALGVTWLVAVDSKESCTKHSNGCSTPLRLPCQEYFRPACDIHDNCYHCGTIFGISRKECDDAFLKDMNTLCKKLGSNSATCPARGKREVTSHRATSIAHSRLWKTALDQKSFLNRKARQVFFLLPTTCQGWAKNYHLAVKLAGANSYSVTTDLETCQGLEHCLPNH.

Positions 1–24 are cleaved as a signal peptide; it reads MKLLAPVLWAMAALGVTWLVAVDS. 4-hydroxyproline is present on residues Pro-38, Pro-42, and Pro-49. His-54 is a catalytic residue. The propeptide at 98–130 is interchain peptide; the sequence is KREVTSHRATSIAHSRLWKTALDQKSFLNRKAR. The residue at position 131 (Gln-131) is a Pyrrolidone carboxylic acid. Pro-137 carries the post-translational modification 4-hydroxyproline.

This sequence belongs to the phospholipase A2 family. Group IX subfamily. As to quaternary structure, heterodimer of an alpha and a beta chain; probably disulfide-linked. It depends on Ca(2+) as a cofactor. As to expression, expressed by the venom duct.

The protein localises to the secreted. The enzyme catalyses a 1,2-diacyl-sn-glycero-3-phosphocholine + H2O = a 1-acyl-sn-glycero-3-phosphocholine + a fatty acid + H(+). In terms of biological role, catalyzes the calcium-dependent hydrolysis of the 2-acyl groups in 3-sn-phosphoglycerides. The polypeptide is Conodipine-P2 (Conus purpurascens (Purple cone)).